Reading from the N-terminus, the 385-residue chain is Succinyl-diaminopimelate desuccinylase (385 aa).

His73 contributes to the Zn(2+) binding site. Residue Asp75 is part of the active site. Zn(2+) is bound at residue Asp106. Catalysis depends on Glu141, which acts as the Proton acceptor. Zn(2+) contacts are provided by Glu142, Glu170, and His359.

It belongs to the peptidase M20A family. DapE subfamily. As to quaternary structure, homodimer. Zn(2+) serves as cofactor. The cofactor is Co(2+).

It catalyses the reaction N-succinyl-(2S,6S)-2,6-diaminopimelate + H2O = (2S,6S)-2,6-diaminopimelate + succinate. Its pathway is amino-acid biosynthesis; L-lysine biosynthesis via DAP pathway; LL-2,6-diaminopimelate from (S)-tetrahydrodipicolinate (succinylase route): step 3/3. Its function is as follows. Catalyzes the hydrolysis of N-succinyl-L,L-diaminopimelic acid (SDAP), forming succinate and LL-2,6-diaminopimelate (DAP), an intermediate involved in the bacterial biosynthesis of lysine and meso-diaminopimelic acid, an essential component of bacterial cell walls. This is Succinyl-diaminopimelate desuccinylase from Methylorubrum extorquens (strain PA1) (Methylobacterium extorquens).